Here is a 132-residue protein sequence, read N- to C-terminus: Small ribosomal subunit protein uS8 (132 aa).

This sequence belongs to the universal ribosomal protein uS8 family. As to quaternary structure, part of the 30S ribosomal subunit. Contacts proteins S5 and S12.

In terms of biological role, one of the primary rRNA binding proteins, it binds directly to 16S rRNA central domain where it helps coordinate assembly of the platform of the 30S subunit. The chain is Small ribosomal subunit protein uS8 from Bacillus velezensis (strain DSM 23117 / BGSC 10A6 / LMG 26770 / FZB42) (Bacillus amyloliquefaciens subsp. plantarum).